The sequence spans 254 residues: PF03932 family protein CutC (254 aa).

This sequence belongs to the CutC family.

The protein resides in the cytoplasm. In Yersinia pestis bv. Antiqua (strain Antiqua), this protein is PF03932 family protein CutC.